The sequence spans 68 residues: Large ribosomal subunit protein bL35 (68 aa).

This sequence belongs to the bacterial ribosomal protein bL35 family.

This chain is Large ribosomal subunit protein bL35, found in Pelagibacter ubique (strain HTCC1062).